Reading from the N-terminus, the 569-residue chain is Complement factor H-related protein 5 (569 aa).

An N-terminal signal peptide occupies residues methionine 1 to glycine 18. 18 disulfide bridges follow: cysteine 23–cysteine 72, cysteine 55–cysteine 83, cysteine 87–cysteine 129, cysteine 114–cysteine 140, cysteine 147–cysteine 189, cysteine 175–cysteine 201, cysteine 208–cysteine 251, cysteine 237–cysteine 262, cysteine 269–cysteine 311, cysteine 297–cysteine 322, cysteine 331–cysteine 370, cysteine 359–cysteine 381, cysteine 389–cysteine 431, cysteine 417–cysteine 442, cysteine 449–cysteine 492, cysteine 478–cysteine 503, cysteine 507–cysteine 558, and cysteine 541–cysteine 568. Sushi domains are found at residues cysteine 23–cysteine 83, arginine 85–phenylalanine 142, glycine 145–glycine 203, arginine 206–glutamate 264, lysine 267–alanine 324, lysine 329–glutamate 383, glutamine 387–glutamate 444, alanine 447–aspartate 505, and cysteine 507–glutamate 569. Asparagine 126 carries N-linked (GlcNAc...) asparagine glycosylation. The N-linked (GlcNAc...) asparagine glycan is linked to asparagine 400.

As to quaternary structure, head-to-tail homodimer and heterodimer with CFHR1 or CFHR2. Binds C3b in vitro. As to expression, expressed by the liver and secreted in plasma.

It is found in the secreted. Functionally, involved in complement regulation. The dimerized forms have avidity for tissue-bound complement fragments and efficiently compete with the physiological complement inhibitor CFH. The chain is Complement factor H-related protein 5 (CFHR5) from Homo sapiens (Human).